The sequence spans 215 residues: MSKVYDWFEERLEIQAIADDITSKYVPPHVNIFYCIGGITFTCFLVQVATGFAMTFYYRPTVAEAFASVQYIMTDVNFGWLIRSIHRWSASMMVLMMVLHVFRVYLTGGFKRPRELTWVTGVIMAVCTVSFGVTGYSLPWDQVGYWAVKIVTGVPDAIPGVGGFIVELLRGGVGVGQATLTRFYSLHTFVLPLLTAVFMLMHFLMIRKQGISGPL.

A helical transmembrane segment spans residues 32-52; sequence IFYCIGGITFTCFLVQVATGF. C35 contacts heme c. 6 residues coordinate heme b: G37, R83, H86, H100, R103, and R114. Residues 90 to 110 form a helical membrane-spanning segment; it reads ASMMVLMMVLHVFRVYLTGGF. Transmembrane regions (helical) follow at residues 116 to 136 and 186 to 206; these read LTWV…VTGY and LHTF…FLMI. 2 residues coordinate heme b: H187 and H202. Heme c is bound by residues R207 and I211. S212 provides a ligand contact to heme b.

The protein belongs to the cytochrome b family. PetB subfamily. In terms of assembly, the 4 large subunits of the cytochrome b6-f complex are cytochrome b6, subunit IV (17 kDa polypeptide, PetD), cytochrome f and the Rieske protein, while the 4 small subunits are PetG, PetL, PetM and PetN. The complex functions as a dimer. Heme b serves as cofactor. The cofactor is heme c. Post-translationally, the N-terminus is blocked.

It localises to the plastid. It is found in the chloroplast thylakoid membrane. In terms of biological role, component of the cytochrome b6-f complex, which mediates electron transfer between photosystem II (PSII) and photosystem I (PSI), cyclic electron flow around PSI, and state transitions. The chain is Cytochrome b6 from Chlamydomonas reinhardtii (Chlamydomonas smithii).